Reading from the N-terminus, the 349-residue chain is Interleukin-10 receptor subunit beta (349 aa).

Residues 1 to 19 form the signal peptide; the sequence is MAPCVAGWLGGFLLVPALG. Residues 20-220 are Extracellular-facing; the sequence is MIPPPEKVRM…RTGNDEITPS (201 aa). 2 Fibronectin type-III domains span residues 23-111 and 112-215; these read PPEK…VEDT and IIGP…TGND. Asn49 carries N-linked (GlcNAc...) asparagine glycosylation. Cys66 and Cys74 are joined by a disulfide. Asn102, Asn161, and Asn199 each carry an N-linked (GlcNAc...) asparagine glycan. Cysteines 188 and 209 form a disulfide. A helical membrane pass occupies residues 221 to 241; sequence WIVAIILIVSVLVVFLFLLGC. The Cytoplasmic portion of the chain corresponds to 242 to 349; the sequence is FVVLWLIYKK…PKLLTSTSEV (108 aa). Ser299 carries the post-translational modification Phosphoserine. The disordered stretch occupies residues 300-349; the sequence is EESEGSKQSPEDNCASEPPSDPGPRELESKDEAPSPPHDDPKLLTSTSEV. The segment covering 322–341 has biased composition (basic and acidic residues); that stretch reads GPRELESKDEAPSPPHDDPK.

Belongs to the type II cytokine receptor family. Heterodimer with IFNLR1.

It localises to the membrane. In terms of biological role, shared cell surface receptor required for the activation of five class 2 cytokines: IL10, IL22, IL26, IL28, and IFNL1. The IFNLR1/IL10RB dimer is a receptor for the cytokine ligands IFNL2 and IFNL3 and mediates their antiviral activity. The ligand/receptor complex stimulate the activation of the JAK/STAT signaling pathway leading to the expression of IFN-stimulated genes (ISG), which contribute to the antiviral state. The sequence is that of Interleukin-10 receptor subunit beta (Il10rb) from Mus musculus (Mouse).